Here is a 233-residue protein sequence, read N- to C-terminus: 5'-methylthioadenosine/S-adenosylhomocysteine nucleosidase (233 aa).

Catalysis depends on glutamate 12, which acts as the Proton acceptor. Residues glycine 78, isoleucine 156, and 177-178 (ME) contribute to the substrate site. Aspartate 201 (proton donor) is an active-site residue.

It belongs to the PNP/UDP phosphorylase family. MtnN subfamily.

The enzyme catalyses S-adenosyl-L-homocysteine + H2O = S-(5-deoxy-D-ribos-5-yl)-L-homocysteine + adenine. It catalyses the reaction S-methyl-5'-thioadenosine + H2O = 5-(methylsulfanyl)-D-ribose + adenine. The catalysed reaction is 5'-deoxyadenosine + H2O = 5-deoxy-D-ribose + adenine. The protein operates within amino-acid biosynthesis; L-methionine biosynthesis via salvage pathway; S-methyl-5-thio-alpha-D-ribose 1-phosphate from S-methyl-5'-thioadenosine (hydrolase route): step 1/2. Its function is as follows. Catalyzes the irreversible cleavage of the glycosidic bond in both 5'-methylthioadenosine (MTA) and S-adenosylhomocysteine (SAH/AdoHcy) to adenine and the corresponding thioribose, 5'-methylthioribose and S-ribosylhomocysteine, respectively. Also cleaves 5'-deoxyadenosine, a toxic by-product of radical S-adenosylmethionine (SAM) enzymes, into 5-deoxyribose and adenine. The sequence is that of 5'-methylthioadenosine/S-adenosylhomocysteine nucleosidase from Listeria welshimeri serovar 6b (strain ATCC 35897 / DSM 20650 / CCUG 15529 / CIP 8149 / NCTC 11857 / SLCC 5334 / V8).